A 36-amino-acid polypeptide reads, in one-letter code: Histone H1-like protein EM5 (36 aa).

Residues 1–36 (MITAAVGALKERGGSSRQAILKYIQANFKVQANPAA) form the H15 domain.

Belongs to the histone H1/H5 family. As to expression, sperm.

It is found in the nucleus. It localises to the chromosome. The protein is Histone H1-like protein EM5 of Ensis minor (Razor shell).